Reading from the N-terminus, the 326-residue chain is Probable sodium/potassium-transporting ATPase subunit beta-3 (326 aa).

Residues 1–59 (MMSSRTRKIYLFVFMFISTSLQLMNGEAKAEPETFRQFLYNKQKGTVLGRTGTSWCQIT) lie on the Cytoplasmic side of the membrane. Residues 60–80 (VFYIIFYIFLSAFFIGCLAIF) traverse the membrane as a helical; Signal-anchor for type II membrane protein segment. The Lumenal segment spans residues 81–326 (LKTLDPKVPR…DKKPVAAPAA (246 aa)). Asn-144 and Asn-147 each carry an N-linked (GlcNAc...) asparagine glycan. Cys-234 and Cys-291 are oxidised to a cystine.

This sequence belongs to the X(+)/potassium ATPases subunit beta family. In terms of assembly, the sodium/potassium-transporting ATPase is composed of a catalytic alpha subunit, an auxiliary non-catalytic beta subunit and an additional regulatory subunit.

Its subcellular location is the cell membrane. This is the non-catalytic component of the active enzyme, which catalyzes the hydrolysis of ATP coupled with the exchange of Na(+) and K(+) ions across the plasma membrane. The beta subunit regulates, through assembly of alpha/beta heterodimers, the number of sodium pumps transported to the plasma membrane. Implicated in genomic response to various soil bacteria that affects fitness, lifespan and brood size. The polypeptide is Probable sodium/potassium-transporting ATPase subunit beta-3 (nkb-3) (Caenorhabditis briggsae).